The sequence spans 361 residues: Velvet complex subunit B (361 aa).

Disordered stretches follow at residues 1-36 (MYAV…SLRQ) and 308-340 (NGAP…VLLR). Residues 23-35 (PSVQYPSGTTSLR) show a composition bias toward polar residues. Residues 47-353 (QDGRSWSLQV…SASALRYRVS (307 aa)) enclose the Velvet domain. Over residues 323–336 (SLNPSRSSPPKSSP) the composition is skewed to low complexity.

The protein belongs to the velvet family. VelB subfamily. In terms of assembly, component of the heterotrimeric velvet complex composed of laeA, veA and velB; VeA acting as a bridging protein between laeA and velB. Interacts with velA. Forms a heterodimeric complex with vosA; the formation of the velB-vosA complex is light-dependent. Interacts with vosA.

The protein localises to the nucleus. Its subcellular location is the cytoplasm. Component of the velvet transcription factor complex that controls sexual/asexual developmental ratio in response to light, promoting sexual development in the darkness while stimulating asexual sporulation under illumination. The velvet complex acts as a global regulator for secondary metabolite gene expression. Component of the velB-VosA heterodimeric complex that plays a dual role in activating genes associated with spore maturation and repressing certain development-associated genes. The velB-VosA complex binds DNA through the DNA-binding domain of vosA that recognizes an 11-nucleotide consensus sequence 5'-CTGGCCGCGGC-3' consisting of two motifs in the promoters of key developmental regulatory genes. Controls conidiophore formation. This chain is Velvet complex subunit B, found in Penicillium rubens (strain ATCC 28089 / DSM 1075 / NRRL 1951 / Wisconsin 54-1255) (Penicillium chrysogenum).